Here is a 395-residue protein sequence, read N- to C-terminus: Flagellin A (395 aa).

Belongs to the bacterial flagellin family.

The protein localises to the secreted. Its subcellular location is the bacterial flagellum. Functionally, flagellin is the subunit protein which polymerizes to form the filaments of bacterial flagella. Homomer of FlaA is able to form a functional filament. The polypeptide is Flagellin A (flaA) (Rhizobium meliloti (Ensifer meliloti)).